The sequence spans 109 residues: Nucleoid-associated protein LBUL_1514 (109 aa).

This sequence belongs to the YbaB/EbfC family. As to quaternary structure, homodimer.

It is found in the cytoplasm. It localises to the nucleoid. In terms of biological role, binds to DNA and alters its conformation. May be involved in regulation of gene expression, nucleoid organization and DNA protection. The protein is Nucleoid-associated protein LBUL_1514 of Lactobacillus delbrueckii subsp. bulgaricus (strain ATCC BAA-365 / Lb-18).